The chain runs to 293 residues: Formamidopyrimidine-DNA glycosylase (293 aa).

Pro2 serves as the catalytic Schiff-base intermediate with DNA. Glu3 functions as the Proton donor in the catalytic mechanism. The active-site Proton donor; for beta-elimination activity is Lys58. The DNA site is built by His104, Arg127, and Arg170. Residues 257–293 form an FPG-type zinc finger; sequence SVYGREGKPCRNPACGGTVERVVQSGRSTFFCASCQT. The active-site Proton donor; for delta-elimination activity is the Arg283.

It belongs to the FPG family. Monomer. Zn(2+) serves as cofactor.

It carries out the reaction Hydrolysis of DNA containing ring-opened 7-methylguanine residues, releasing 2,6-diamino-4-hydroxy-5-(N-methyl)formamidopyrimidine.. The catalysed reaction is 2'-deoxyribonucleotide-(2'-deoxyribose 5'-phosphate)-2'-deoxyribonucleotide-DNA = a 3'-end 2'-deoxyribonucleotide-(2,3-dehydro-2,3-deoxyribose 5'-phosphate)-DNA + a 5'-end 5'-phospho-2'-deoxyribonucleoside-DNA + H(+). In terms of biological role, involved in base excision repair of DNA damaged by oxidation or by mutagenic agents. Acts as a DNA glycosylase that recognizes and removes damaged bases. Has a preference for oxidized purines, such as 7,8-dihydro-8-oxoguanine (8-oxoG). Has AP (apurinic/apyrimidinic) lyase activity and introduces nicks in the DNA strand. Cleaves the DNA backbone by beta-delta elimination to generate a single-strand break at the site of the removed base with both 3'- and 5'-phosphates. This chain is Formamidopyrimidine-DNA glycosylase, found in Brucella canis (strain ATCC 23365 / NCTC 10854 / RM-666).